We begin with the raw amino-acid sequence, 125 residues long: Small ribosomal subunit protein uS13 (125 aa).

Residues 91 to 125 (HRRSLPVRGQNTQTNARTRKGKRKTVAGKKKAARK) are disordered. A compositionally biased stretch (basic residues) spans 107–125 (RTRKGKRKTVAGKKKAARK).

The protein belongs to the universal ribosomal protein uS13 family. As to quaternary structure, part of the 30S ribosomal subunit. Forms a loose heterodimer with protein S19. Forms two bridges to the 50S subunit in the 70S ribosome.

Located at the top of the head of the 30S subunit, it contacts several helices of the 16S rRNA. In the 70S ribosome it contacts the 23S rRNA (bridge B1a) and protein L5 of the 50S subunit (bridge B1b), connecting the 2 subunits; these bridges are implicated in subunit movement. Contacts the tRNAs in the A and P-sites. The chain is Small ribosomal subunit protein uS13 from Chlorobium phaeovibrioides (strain DSM 265 / 1930) (Prosthecochloris vibrioformis (strain DSM 265)).